A 298-amino-acid chain; its full sequence is Tyrosine recombinase XerD (298 aa).

One can recognise a Core-binding (CB) domain in the interval 3 to 88 (ALDHPLIDQF…GLRGFFRYLL (86 aa)). A Tyr recombinase domain is found at 109 to 292 (PLPKSLSEAD…AKARLQQLHA (184 aa)). Active-site residues include R149, K173, H244, R247, and H270. Residue Y279 is the O-(3'-phospho-DNA)-tyrosine intermediate of the active site.

Belongs to the 'phage' integrase family. XerD subfamily. In terms of assembly, forms a cyclic heterotetrameric complex composed of two molecules of XerC and two molecules of XerD.

It localises to the cytoplasm. Functionally, site-specific tyrosine recombinase, which acts by catalyzing the cutting and rejoining of the recombining DNA molecules. The XerC-XerD complex is essential to convert dimers of the bacterial chromosome into monomers to permit their segregation at cell division. It also contributes to the segregational stability of plasmids. The protein is Tyrosine recombinase XerD of Pseudomonas putida (strain ATCC 47054 / DSM 6125 / CFBP 8728 / NCIMB 11950 / KT2440).